The chain runs to 87 residues: Long neurotoxin homolog (87 aa).

The signal sequence occupies residues 1-21 (MKTLLLTLVVVTIVCLDLGYT). 5 disulfide bridges follow: Cys24-Cys47, Cys27-Cys32, Cys40-Cys64, Cys68-Cys80, and Cys81-Cys86.

In terms of tissue distribution, expressed by the venom gland.

Its subcellular location is the secreted. In terms of biological role, inhibits carbachol-induced muscle contraction in a reversible manner. The protein is Long neurotoxin homolog of Bungarus multicinctus (Many-banded krait).